Reading from the N-terminus, the 188-residue chain is uncharacterized protein (188 aa).

A compositionally biased stretch (basic and acidic residues) spans 1–15; that stretch reads MVSSKDKIKEELKQE. A disordered region spans residues 1 to 21; it reads MVSSKDKIKEELKQEEPEENV.

This is an uncharacterized protein from Saccharolobus islandicus (Sulfolobus islandicus).